Consider the following 810-residue polypeptide: Phenylalanine--tRNA ligase beta subunit (810 aa).

The 116-residue stretch at 39–154 (APPTEKIVVG…EGTPVGQDIR (116 aa)) folds into the tRNA-binding domain. A B5 domain is found at 405-480 (PQRAPVSMRA…RIYGFEKIPA (76 aa)). Residues Asp-458, Asp-464, Glu-467, and Glu-468 each contribute to the Mg(2+) site. The 103-residue stretch at 707 to 809 (SKFPPVRRDI…MARVYGARLR (103 aa)) folds into the FDX-ACB domain.

Belongs to the phenylalanyl-tRNA synthetase beta subunit family. Type 1 subfamily. Tetramer of two alpha and two beta subunits. Mg(2+) is required as a cofactor.

It is found in the cytoplasm. It carries out the reaction tRNA(Phe) + L-phenylalanine + ATP = L-phenylalanyl-tRNA(Phe) + AMP + diphosphate + H(+). The sequence is that of Phenylalanine--tRNA ligase beta subunit from Burkholderia mallei (strain ATCC 23344).